A 99-amino-acid polypeptide reads, in one-letter code: A-type ATP synthase subunit F (99 aa).

This sequence belongs to the V-ATPase F subunit family. As to quaternary structure, has multiple subunits with at least A(3), B(3), C, D, E, F, H, I and proteolipid K(x).

The protein resides in the cell membrane. Its function is as follows. Component of the A-type ATP synthase that produces ATP from ADP in the presence of a proton gradient across the membrane. This is A-type ATP synthase subunit F from Methanococcus maripaludis (strain DSM 14266 / JCM 13030 / NBRC 101832 / S2 / LL).